The chain runs to 98 residues: NADH-ubiquinone oxidoreductase chain 4L (98 aa).

The next 3 membrane-spanning stretches (helical) occupy residues 1 to 21 (MPII…GMLT), 29 to 49 (SLLC…LMAL), and 58 to 78 (IVPI…LSLL).

It belongs to the complex I subunit 4L family. In terms of assembly, core subunit of respiratory chain NADH dehydrogenase (Complex I) which is composed of 45 different subunits.

Its subcellular location is the mitochondrion inner membrane. The catalysed reaction is a ubiquinone + NADH + 5 H(+)(in) = a ubiquinol + NAD(+) + 4 H(+)(out). Functionally, core subunit of the mitochondrial membrane respiratory chain NADH dehydrogenase (Complex I) which catalyzes electron transfer from NADH through the respiratory chain, using ubiquinone as an electron acceptor. Part of the enzyme membrane arm which is embedded in the lipid bilayer and involved in proton translocation. The chain is NADH-ubiquinone oxidoreductase chain 4L (MT-ND4L) from Presbytis melalophos (Mitred leaf monkey).